The following is a 392-amino-acid chain: MDLFEYQAKELFAAHGVPITPGEVAENPDQAADIARRLGGRVVVKAQVKTGGRGKAGGVKLADDADAAAAAAEAILGMEIRGHRVHRVLVTTAVDIAHEYYVAFLVDRSRRSFLAMGSAEGGVEIEQVAAENPQAIVRVPIDATEGVDATLAARIADDIGFPAAVRDEAVRILRGLWEAFQAEDASLVEVNPLVRTLDDRLIALDGKVTLDDNADFRHPDRARFADPSAADPLEAKAKAAGLHYVKLDGEVGVIGNGAGLVMSTLDVVAYAGETYGGIRPANFLDIGGGASAEVMAAGLTVVLADPAVRAVLVNVFGGITACDAVARGIVAAFENLIAAGERIDVPLVVRLDGNRAAEGRAILAAAQLPRVEQVETMDDAARRVAELAAAAR.

One can recognise an ATP-grasp domain in the interval 9–236 (KELFAAHGVP…PSAADPLEAK (228 aa)). Residues K45, 52–54 (GRG), V94, and E99 each bind ATP. 2 residues coordinate Mg(2+): N191 and D205. Residues N256 and 318-320 (GIT) contribute to the substrate site.

The protein belongs to the succinate/malate CoA ligase beta subunit family. In terms of assembly, heterotetramer of two alpha and two beta subunits. Requires Mg(2+) as cofactor.

The enzyme catalyses succinate + ATP + CoA = succinyl-CoA + ADP + phosphate. It carries out the reaction GTP + succinate + CoA = succinyl-CoA + GDP + phosphate. It participates in carbohydrate metabolism; tricarboxylic acid cycle; succinate from succinyl-CoA (ligase route): step 1/1. Succinyl-CoA synthetase functions in the citric acid cycle (TCA), coupling the hydrolysis of succinyl-CoA to the synthesis of either ATP or GTP and thus represents the only step of substrate-level phosphorylation in the TCA. The beta subunit provides nucleotide specificity of the enzyme and binds the substrate succinate, while the binding sites for coenzyme A and phosphate are found in the alpha subunit. The polypeptide is Succinate--CoA ligase [ADP-forming] subunit beta (Acidothermus cellulolyticus (strain ATCC 43068 / DSM 8971 / 11B)).